Here is a 213-residue protein sequence, read N- to C-terminus: Protein ras-1 (213 aa).

Position 15–22 (15–22) interacts with GTP; the sequence is GGGGVGKS. Residues 37–45 carry the Effector region motif; it reads YDPTIEDSY. GTP contacts are provided by residues 62 to 66 and 121 to 124; these read DTAGQ and NKYD. The residue at position 210 (Cys-210) is a Cysteine methyl ester. Cys-210 carries the S-farnesyl cysteine lipid modification. The propeptide at 211-213 is removed in mature form; it reads IMM.

This sequence belongs to the small GTPase superfamily. Ras family.

Its subcellular location is the cell membrane. It carries out the reaction GTP + H2O = GDP + phosphate + H(+). In terms of biological role, ras proteins bind GDP/GTP and possess intrinsic GTPase activity. The chain is Protein ras-1 (ras-1) from Neurospora crassa (strain ATCC 24698 / 74-OR23-1A / CBS 708.71 / DSM 1257 / FGSC 987).